Consider the following 120-residue polypeptide: MDYEFLRDVTGGVKVRMSMGHEVVGHWFNEEVKDNLSLLDEVEQAARTVKGSERSWQRAGHEYTIWMDGEEVMIRANQLDFSGDEMEEGMSYYNEESLSLCGMEDFLRVVAAYREFVSKA.

It belongs to the UPF0231 family.

This Salmonella heidelberg (strain SL476) protein is UPF0231 protein YacL.